Reading from the N-terminus, the 310-residue chain is S-adenosylmethionine-dependent nucleotide dehydratase (310 aa).

The Radical SAM core domain maps to 3–221; that stretch reads PAIPPTINLH…VERHRKVESS (219 aa). C17, C21, and C24 together coordinate [4Fe-4S] cluster.

This sequence belongs to the radical SAM superfamily. Viperin family. [4Fe-4S] cluster is required as a cofactor.

It catalyses the reaction GTP + AH2 + S-adenosyl-L-methionine = 3'-deoxy-3',4'-didehydro-GTP + 5'-deoxyadenosine + L-methionine + A + H2O + H(+). Functionally, expression of pVip15 in E.coli (strain MG1655) confers resistance to phage T7; prevents culture collapse upon infection. Catalyzes the conversion of guanosine triphosphate (GTP) to 3'-deoxy-3',4'-didehydro-GTP (ddhGTP), probably via a SAM-dependent radical mechanism. The modified nucleotide represses transcription from T7 RNA polymerase-directed genes (possibly by acting as chain terminators), strongly suggesting these nucleotides block viral polymerase transcription. The polypeptide is S-adenosylmethionine-dependent nucleotide dehydratase (Coraliomargarita akajimensis (strain DSM 45221 / IAM 15411 / JCM 23193 / KCTC 12865 / 04OKA010-24)).